The following is a 397-amino-acid chain: MKLFFFLYTFGLVQTIFGVEIKQGFKWNKILYEGDTSENFNPDNNILTAFAYDPESQKLFLTVPRKYPETMYTLAEVDTEKNSFESGDTSPLLGKFSGHETGKELTSVYQPVIDECHRLWVVDVGSVERNSDGTEGQPEHNPTLVAYDLKEANYPEVIRYTFPDNSIEKPTFLGGFAVDVVKPDECSETFVYITNFLTNALIVYDHKNKDSWTVQDSTFGPDKKSKFDHDGQQYEYEAGIFGITLGERDNEGNRQAYYLVASSTKLHSINTKELKQKGSKVNANYLGDRGESTDAIGLVYDPKTKTIFFVESNSKRVSCWNTQETLNKDKIDVIYHNADFSFGTDISIDSQDNLWFLANGLPPLENSDKFVFTKPRYQIFKVNIQEAIAGTKCEKNL.

Positions 1 to 18 (MKLFFFLYTFGLVQTIFG) are cleaved as a signal peptide.

Belongs to the major royal jelly protein family. Salivary gland (at protein level).

It is found in the secreted. In terms of biological role, probably modulates blood feeding of sand flies on vertebrate species by binding and sequestering different mediators involved in the host response. Binds biogenic amines. Binds adrenaline and noradrenaline with high affinity. Binds serotonin. Binds dopamine and octopamine. Exhibits anti-inflammatory effects in the host: reduces IL17A, TNF-alpha (TNF) and IFN-gamma (IFNG) production by host lymph node cells, suppresses expression of MHC-II and CD86, reduces TNF-alpha production and increases IL10 production, in host bone marrow-derived dendritic cells (BMDCs) stimulated by lipopolysaccharides. Reduces pain in mouse mechanical hypernociception model. This is Yellow-related salivary protein LJM111 from Lutzomyia longipalpis (Sand fly).